Reading from the N-terminus, the 887-residue chain is Semaphorin-6B (887 aa).

The first 26 residues, 1–26 (MWTPRAPPPRPALLFLLLLLLRVTHG), serve as a signal peptide directing secretion. Residues 27–605 (LFPDEPPPLS…VSVNLLVTSS (579 aa)) are Extracellular-facing. A Sema domain is found at 32 to 525 (PPPLSVAPRD…FPRCVVRVPV (494 aa)). The N-linked (GlcNAc...) asparagine glycan is linked to Asn-75. 2 disulfide bridges follow: Cys-117–Cys-127 and Cys-145–Cys-154. N-linked (GlcNAc...) asparagine glycans are attached at residues Asn-156, Asn-168, and Asn-292. Intrachain disulfides connect Cys-268-Cys-379 and Cys-293-Cys-338. N-linked (GlcNAc...) asparagine glycans are attached at residues Asn-387, Asn-442, and Asn-463. 4 disulfides stabilise this stretch: Cys-487/Cys-519, Cys-528/Cys-546, Cys-534/Cys-580, and Cys-538/Cys-554. Residues 606–626 (VAAFVVGAVVSGFSVGWFVGL) form a helical membrane-spanning segment. The Cytoplasmic portion of the chain corresponds to 627 to 887 (RERRELARRK…TGERTAPPVP (261 aa)). 3 disordered regions span residues 656-675 (LGER…GGPG), 697-717 (HGGP…TPLP), and 759-887 (APEQ…PPVP). The span at 662–674 (TGTGGRGGAGGGP) shows a compositional bias: gly residues. Position 667 is an omega-N-methylarginine (Arg-667). A compositionally biased stretch (low complexity) spans 707-717 (LLPTPEQTPLP).

It belongs to the semaphorin family.

It is found in the cell membrane. Functions as a cell surface repellent for mossy fibers of developing neurons in the hippocampus where it plays a role in axon guidance. May function through the PLXNA4 receptor expressed by mossy cell axons. In Rattus norvegicus (Rat), this protein is Semaphorin-6B (Sema6b).